The primary structure comprises 248 residues: MAMQLEICANSATSCQQAELGGATRVELCAGIPEGGTTPSAGEMAVARSLIAIPIHVIIRPRAGDFVYSSEEIEAMCYDIRVVRSLGMEGVVFGCLTPEGGYDEEANSRLLKEAQGMQLTFHRAFDVCAAPFEMLEKLIATGFHRVLTSGCAPTALEGKDMIGALNKQAAGRIGIMAGCGIRLGNIETLARHTGITQFHSSLRHDIPSSMRFRRPEVSMGGTVKIDEYSRPETSADMVRQAVDILQGI.

The protein belongs to the CutC family.

Its subcellular location is the cytoplasm. This is PF03932 family protein CutC from Porphyromonas gingivalis (strain ATCC 33277 / DSM 20709 / CIP 103683 / JCM 12257 / NCTC 11834 / 2561).